We begin with the raw amino-acid sequence, 20 residues long: DGCPPHPVPGMHPCMCTNTC.

2 cysteine pairs are disulfide-bonded: Cys3-Cys16 and Cys14-Cys20.

As to expression, expressed by the venom duct.

Its subcellular location is the secreted. Functionally, alpha-conotoxins act on postsynaptic membranes, they bind to the nicotinic acetylcholine receptors (nAChR) and thus inhibit them. This Conus tessulatus (Tessellate cone) protein is Alpha-conotoxin-like ts14a.